Reading from the N-terminus, the 127-residue chain is Large ribosomal subunit protein bL12c (127 aa).

Positions 104-127 (GVAKDAAEEAKKQIEDAGGKASLK) are disordered. Positions 105–121 (VAKDAAEEAKKQIEDAG) are enriched in basic and acidic residues.

It belongs to the bacterial ribosomal protein bL12 family. Homodimer. Part of the ribosomal stalk of the 50S ribosomal subunit. Forms a multimeric L10(L12)X complex, where L10 forms an elongated spine to which 2 to 4 L12 dimers bind in a sequential fashion. Binds GTP-bound translation factors.

The protein localises to the plastid. Its subcellular location is the chloroplast. Forms part of the ribosomal stalk which helps the ribosome interact with GTP-bound translation factors. Is thus essential for accurate translation. The sequence is that of Large ribosomal subunit protein bL12c from Trieres chinensis (Marine centric diatom).